A 278-amino-acid polypeptide reads, in one-letter code: Undecaprenyl-diphosphatase (278 aa).

The next 8 membrane-spanning stretches (helical) occupy residues 14-34 (GTTE…PWLF), 40-60 (GLAF…AYFW), 89-109 (WAVI…NDVI), 121-141 (TAIV…WLAE), 153-173 (LGLR…LPGV), 196-216 (FSFI…TLKL), 227-247 (VLFV…IAFL), and 257-277 (SIFI…VSFA).

Belongs to the UppP family.

It is found in the cell membrane. It carries out the reaction di-trans,octa-cis-undecaprenyl diphosphate + H2O = di-trans,octa-cis-undecaprenyl phosphate + phosphate + H(+). Its function is as follows. Catalyzes the dephosphorylation of undecaprenyl diphosphate (UPP). Confers resistance to bacitracin. This chain is Undecaprenyl-diphosphatase, found in Thermomicrobium roseum (strain ATCC 27502 / DSM 5159 / P-2).